The primary structure comprises 142 residues: Large ribosomal subunit protein uL16 (142 aa).

The protein belongs to the universal ribosomal protein uL16 family. As to quaternary structure, part of the 50S ribosomal subunit.

In terms of biological role, binds 23S rRNA and is also seen to make contacts with the A and possibly P site tRNAs. The sequence is that of Large ribosomal subunit protein uL16 from Thermotoga sp. (strain RQ2).